The chain runs to 348 residues: Protein RecA (348 aa).

Position 64–71 (64–71 (GPESSGKT)) interacts with ATP. The segment covering 325-335 (YEIDGSSKEPL) has biased composition (basic and acidic residues). Residues 325–348 (YEIDGSSKEPLDEKEETLSLLDDE) form a disordered region.

Belongs to the RecA family.

The protein resides in the cytoplasm. Functionally, can catalyze the hydrolysis of ATP in the presence of single-stranded DNA, the ATP-dependent uptake of single-stranded DNA by duplex DNA, and the ATP-dependent hybridization of homologous single-stranded DNAs. It interacts with LexA causing its activation and leading to its autocatalytic cleavage. The polypeptide is Protein RecA (Listeria monocytogenes serotype 1/2a (strain 10403S)).